A 396-amino-acid chain; its full sequence is G-protein coupled receptor 84 (396 aa).

The Extracellular portion of the chain corresponds to 1–21; the sequence is MWNSSDANFSCYHESVLGYRY. Asn-3 and Asn-8 each carry an N-linked (GlcNAc...) asparagine glycan. The chain crosses the membrane as a helical span at residues 22–42; sequence FAVIWGVAVAVTGTVGNVLTL. Residues 43 to 57 are Cytoplasmic-facing; that stretch reads LALAIRPKLRTRFNL. A helical transmembrane segment spans residues 58–78; it reads LIANLTLADLLYCTLLQPFSV. Residues 79–94 are Extracellular-facing; the sequence is DTYLHLHWRTGAVFCR. The helical transmembrane segment at 95-115 threads the bilayer; the sequence is IFGLLLFTSNSVSILTLCLIA. Topologically, residues 116 to 135 are cytoplasmic; the sequence is LGRYLLIAHPKLFPQVFSAK. The helical transmembrane segment at 136-156 threads the bilayer; sequence GIVLALVGSWVVGVTSFAPLW. The Extracellular portion of the chain corresponds to 157–180; it reads NVFVLVPVVCTCSFDRMRGRPYTT. Residues 181-201 traverse the membrane as a helical segment; that stretch reads ILMGIYFVLGLSSVGVFYCLI. At 202 to 320 the chain is on the cytoplasmic side; it reads HRQVKRAARA…PSEFGKVTRM (119 aa). Phosphoserine is present on residues Ser-221 and Ser-224. Positions 241–310 are disordered; it reads LDSGVASRGP…TAGARRATDA (70 aa). A compositionally biased stretch (polar residues) spans 253–269; the sequence is GISSEPVSAATTQTLEG. Thr-263 and Thr-264 each carry phosphothreonine. The segment covering 290–308 has biased composition (basic and acidic residues); sequence SLPEVHRKPRETAGARRAT. The chain crosses the membrane as a helical span at residues 321–341; it reads CFAVFLCFALSYIPFLLLNIL. Topologically, residues 342–352 are extracellular; the sequence is DARGRAPRVVH. Residues 353–373 traverse the membrane as a helical segment; it reads MVAANLTWLNSCINPVLYAAM. Topologically, residues 374–396 are cytoplasmic; that stretch reads NRQFRHAYGSILKRGPQSFRRFH.

This sequence belongs to the G-protein coupled receptor 1 family. Interacts with ARRB2 and ARR3. Post-translationally, phosphorylated by a subset of GPR84-activating ligands. Constitutively phosphorylated at Ser-221 and Ser-224 in the absence of 2-HTP. By contrast, Thr-263 and Thr-264 are phosphorylated only following prior cell treatment with 2-HTP. As to expression, expressed predominantly in hematopoietic tissues. Expressed mainly in the bone marrow with transcripts also detected in spleen, the lymph node, liver and the lung.

Its subcellular location is the cell membrane. Functionally, g protein-coupled receptor that responds endogenously to dietary fatty acids or nutrient, specifically medium-chain free fatty acid (FFA) with carbon chain lengths of C9 to C14. Capric acid (C10:0), undecanoic acid (C11:0) and lauric acid (C12:0) are the most potent agonists. In immune cells, functions as a pro-inflammatory receptor via 6-OAU and promotes the expression of pro-inflammatory mediators such as TNFalpha, IL-6 and IL-12B as well as stimulating chemotactic responses through activation of signaling mediators AKT, ERK and NF-kappa-B (by sim). In addition, triggers increased bacterial adhesion and phagocytosis in macrophages and regulates pro-inflammatory function via enhancing NLRP3 inflammasome activation. Also plays an important role in inflammation by modulating neutrophil functions. Mechanistically, promotes neutrophil chemotaxis, reactive oxygen species (ROS) production and degranulation via LYN-AKT/ERK pathway. To regulate ROS production, communicates with the two formyl peptide receptors FPR2 and FPR1 to control the NADPH oxidase activity in neutrophils. This is G-protein coupled receptor 84 (Gpr84) from Mus musculus (Mouse).